The primary structure comprises 1515 residues: Lysophospholipase nte1 (1515 aa).

Residues Met-1–Thr-59 lie on the Cytoplasmic side of the membrane. A helical membrane pass occupies residues Ser-60–Ile-80. Residues Lys-81–Thr-102 are Lumenal-facing. The helical transmembrane segment at Met-103–Val-123 threads the bilayer. Residues Arg-124–Ile-1515 are Cytoplasmic-facing. Disordered stretches follow at residues Met-278–Met-303, Val-519–Asn-580, and Val-617–Gly-639. Composition is skewed to polar residues over residues Leu-543–Ala-554 and Pro-566–Arg-579. A nucleoside 3',5'-cyclic phosphate-binding positions include Ser-670–Tyr-789 and Arg-835–Arg-955. Residues Leu-1212–Lys-1376 enclose the PNPLA domain. The GXGXXG signature appears at Gly-1216–Gly-1221. Residues Gly-1243 to Gly-1247 carry the GXSXG motif. The active-site Nucleophile is Ser-1245. Catalysis depends on Asp-1363, which acts as the Proton acceptor. The DGA/G signature appears at Asp-1363–Gly-1365.

Belongs to the NTE family.

The protein localises to the endoplasmic reticulum membrane. The enzyme catalyses a 1-acyl-sn-glycero-3-phosphocholine + H2O = sn-glycerol 3-phosphocholine + a fatty acid + H(+). Its activity is regulated as follows. Inhibited by organophosphorus esters. Its function is as follows. Intracellular phospholipase B that catalyzes the double deacylation of phosphatidylcholine (PC) to glycerophosphocholine (GroPCho). Plays an important role in membrane lipid homeostasis. Responsible for the rapid PC turnover in response to inositol, elevated temperatures, or when choline is present in the growth medium. The protein is Lysophospholipase nte1 (nte1) of Neurospora crassa (strain ATCC 24698 / 74-OR23-1A / CBS 708.71 / DSM 1257 / FGSC 987).